The following is a 196-amino-acid chain: Holliday junction branch migration complex subunit RuvA (196 aa).

The interval 1–63 (MIEYIKGEIV…EDAHLLFGFA (63 aa)) is domain I. The segment at 64-142 (EKIERELFLL…PMESMAGNLP (79 aa)) is domain II. Positions 142-146 (PEASV) are flexible linker. Residues 147 to 196 (SNGAVTEEAVAALVMLGFQKAASQKAVSAILKGSPTLAVEQVIKTALRML) form a domain III region.

It belongs to the RuvA family. Homotetramer. Forms an RuvA(8)-RuvB(12)-Holliday junction (HJ) complex. HJ DNA is sandwiched between 2 RuvA tetramers; dsDNA enters through RuvA and exits via RuvB. An RuvB hexamer assembles on each DNA strand where it exits the tetramer. Each RuvB hexamer is contacted by two RuvA subunits (via domain III) on 2 adjacent RuvB subunits; this complex drives branch migration. In the full resolvosome a probable DNA-RuvA(4)-RuvB(12)-RuvC(2) complex forms which resolves the HJ.

It is found in the cytoplasm. Functionally, the RuvA-RuvB-RuvC complex processes Holliday junction (HJ) DNA during genetic recombination and DNA repair, while the RuvA-RuvB complex plays an important role in the rescue of blocked DNA replication forks via replication fork reversal (RFR). RuvA specifically binds to HJ cruciform DNA, conferring on it an open structure. The RuvB hexamer acts as an ATP-dependent pump, pulling dsDNA into and through the RuvAB complex. HJ branch migration allows RuvC to scan DNA until it finds its consensus sequence, where it cleaves and resolves the cruciform DNA. This is Holliday junction branch migration complex subunit RuvA from Parabacteroides distasonis (strain ATCC 8503 / DSM 20701 / CIP 104284 / JCM 5825 / NCTC 11152).